Reading from the N-terminus, the 148-residue chain is Deoxyuridine 5'-triphosphate nucleotidohydrolase (148 aa).

Residues 67 to 69 (RSG), asparagine 80, 84 to 86 (TID), and lysine 94 contribute to the substrate site.

The protein belongs to the dUTPase family. Mg(2+) serves as cofactor.

The enzyme catalyses dUTP + H2O = dUMP + diphosphate + H(+). It functions in the pathway pyrimidine metabolism; dUMP biosynthesis; dUMP from dCTP (dUTP route): step 2/2. This enzyme is involved in nucleotide metabolism: it produces dUMP, the immediate precursor of thymidine nucleotides and it decreases the intracellular concentration of dUTP so that uracil cannot be incorporated into DNA. In Orientia tsutsugamushi (strain Boryong) (Rickettsia tsutsugamushi), this protein is Deoxyuridine 5'-triphosphate nucleotidohydrolase.